Consider the following 99-residue polypeptide: Malonate decarboxylase acyl carrier protein (99 aa).

Ser25 is subject to O-(phosphoribosyl dephospho-coenzyme A)serine.

The protein belongs to the MdcC family. Covalently binds the prosthetic group of malonate decarboxylase.

It is found in the cytoplasm. In terms of biological role, subunit of malonate decarboxylase, it is an acyl carrier protein to which acetyl and malonyl thioester residues are bound via a 2'-(5''-phosphoribosyl)-3'-dephospho-CoA prosthetic group and turn over during the catalytic mechanism. This is Malonate decarboxylase acyl carrier protein from Azotobacter vinelandii (strain DJ / ATCC BAA-1303).